Consider the following 141-residue polypeptide: Nucleoside triphosphatase NudI (141 aa).

Residues 1–141 (MRQRTIVCPI…RLTFTQKGLL (141 aa)) form the Nudix hydrolase domain. A Nudix box motif is present at residues 38–59 (GGMEPGETMEEALRREIREELG).

Belongs to the Nudix hydrolase family. NudI subfamily. Monomer. Mg(2+) is required as a cofactor.

The enzyme catalyses a ribonucleoside 5'-triphosphate + H2O = a ribonucleoside 5'-phosphate + diphosphate + H(+). It catalyses the reaction a 2'-deoxyribonucleoside 5'-triphosphate + H2O = a 2'-deoxyribonucleoside 5'-phosphate + diphosphate + H(+). The catalysed reaction is dUTP + H2O = dUMP + diphosphate + H(+). It carries out the reaction dTTP + H2O = dTMP + diphosphate + H(+). The enzyme catalyses dCTP + H2O = dCMP + diphosphate + H(+). Its function is as follows. Catalyzes the hydrolysis of nucleoside triphosphates, with a preference for pyrimidine deoxynucleoside triphosphates (dUTP, dTTP and dCTP). This chain is Nucleoside triphosphatase NudI, found in Enterobacter sp. (strain 638).